A 409-amino-acid polypeptide reads, in one-letter code: MAENSVKKVVLAYSGGLDTSVILRWLQTERGAEVVTFTADLGQGEELEPARRKAEMFGVKEIFVEDLRETFVKDFVFPMFRANALYEGQYLLGTSIARPLIAQRQIEIAEAVGADAVAHGATGKGNDQVRFELAYYALKPDVKVVAPWREWSLTSRTKLLEFAEAHQIPIAKDKRGEAPFSVDANLLHSSSEGKILEDPAQAPDEIVYQRTISPEAAPDVVTEISIDFAQGDAVALNGVALSPATLLTRLNELGRDNGIGRLDLVENRFVGMKSRGVYETPGGTILLAAHRAIESITLDREAAHLKDSLMPRYAELIYNGFWFSPERRMLQALIDASQNSVTGRVRLKLYKGNVIVAGRESPNSLYSARMVTFEDDEGAYNQQDAAGFIKLNALRLRLGGAIGRRGGAL.

Residues 12 to 20 (AYSGGLDTS) and Ala39 contribute to the ATP site. Positions 90 and 95 each coordinate L-citrulline. Gly120 contacts ATP. Thr122, Asn126, and Asp127 together coordinate L-aspartate. Asn126 contributes to the L-citrulline binding site. L-citrulline-binding residues include Arg130, Ser181, Ser190, Glu266, and Tyr278.

It belongs to the argininosuccinate synthase family. Type 1 subfamily. Homotetramer.

It is found in the cytoplasm. It carries out the reaction L-citrulline + L-aspartate + ATP = 2-(N(omega)-L-arginino)succinate + AMP + diphosphate + H(+). It functions in the pathway amino-acid biosynthesis; L-arginine biosynthesis; L-arginine from L-ornithine and carbamoyl phosphate: step 2/3. In Acidiphilium cryptum (strain JF-5), this protein is Argininosuccinate synthase.